Reading from the N-terminus, the 271-residue chain is 3-methyl-2-oxobutanoate hydroxymethyltransferase (271 aa).

Mg(2+) contacts are provided by aspartate 53 and aspartate 92. 3-methyl-2-oxobutanoate contacts are provided by residues 53 to 54 (DS), aspartate 92, and lysine 120. Position 122 (glutamate 122) interacts with Mg(2+). Glutamate 189 acts as the Proton acceptor in catalysis.

It belongs to the PanB family. Homodecamer; pentamer of dimers. Mg(2+) is required as a cofactor.

The protein resides in the cytoplasm. The enzyme catalyses 3-methyl-2-oxobutanoate + (6R)-5,10-methylene-5,6,7,8-tetrahydrofolate + H2O = 2-dehydropantoate + (6S)-5,6,7,8-tetrahydrofolate. Its pathway is cofactor biosynthesis; (R)-pantothenate biosynthesis; (R)-pantoate from 3-methyl-2-oxobutanoate: step 1/2. Catalyzes the reversible reaction in which hydroxymethyl group from 5,10-methylenetetrahydrofolate is transferred onto alpha-ketoisovalerate to form ketopantoate. The protein is 3-methyl-2-oxobutanoate hydroxymethyltransferase of Paraburkholderia phytofirmans (strain DSM 17436 / LMG 22146 / PsJN) (Burkholderia phytofirmans).